Here is a 592-residue protein sequence, read N- to C-terminus: A-type ATP synthase subunit A (592 aa).

Residue 234–241 (GAFGTGKT) coordinates ATP.

Belongs to the ATPase alpha/beta chains family. Has multiple subunits with at least A(3), B(3), C, D, E, F, H, I and proteolipid K(x).

The protein resides in the cell membrane. The enzyme catalyses ATP + H2O + 4 H(+)(in) = ADP + phosphate + 5 H(+)(out). Functionally, component of the A-type ATP synthase that produces ATP from ADP in the presence of a proton gradient across the membrane. The A chain is the catalytic subunit. In Nitrosopumilus maritimus (strain SCM1), this protein is A-type ATP synthase subunit A.